The chain runs to 651 residues: Mitochondrial sodium/calcium exchanger protein (651 aa).

A helical membrane pass occupies residues V51–I71. Residues A72 to E91 lie on the Cytoplasmic side of the membrane. A helical transmembrane segment spans residues S92–I112. Over S113–A126 the chain is Extracellular. A helical membrane pass occupies residues L127–F147. Residues T148–D161 lie on the Cytoplasmic side of the membrane. The chain crosses the membrane as a helical span at residues L162–I182. A topological domain (extracellular) is located at residue E183. Residues V184–L204 form a helical membrane-spanning segment. Over G205–N398 the chain is Cytoplasmic. Residues I399 to V419 form a helical membrane-spanning segment. The Extracellular segment spans residues P420–K428. A helical membrane pass occupies residues P429–I449. The Cytoplasmic portion of the chain corresponds to T450–P458. A helical transmembrane segment spans residues G459–L479. Topologically, residues P480–K486 are extracellular. Residues Y487–T507 traverse the membrane as a helical segment. Residues S508–E510 lie on the Cytoplasmic side of the membrane. Residues I511 to L531 form a helical membrane-spanning segment. Residues T532–M559 are Extracellular-facing. Residues A560–I580 traverse the membrane as a helical segment. Over A581 to V595 the chain is Cytoplasmic. A helical membrane pass occupies residues Y596–I616. Over Q617 to A626 the chain is Extracellular. The helical transmembrane segment at V627–V647 threads the bilayer. At L648 to N651 the chain is on the cytoplasmic side.

The protein belongs to the Ca(2+):cation antiporter (CaCA) (TC 2.A.19) family. SLC24A subfamily. As to expression, expressed in the seam cells of the organism. Expression is visible in the seam cells across all larval stages, and expression persists into the adult stage of the organism.

Its subcellular location is the mitochondrion inner membrane. Its activity is regulated as follows. Inhibited by the sodium/calcium exchanger inhibitor CGP-37157. Functionally, mitochondrial sodium/calcium antiporter that mediates sodium-dependent calcium efflux from mitochondrion, thereby acting as a key regulator of mitochondrion calcium homeostasis. Required for patterning of neural circuits: functions in the same pathway as RAC-dependent effectors of the unc-6/netrin signaling pathway to set left/ right patterning of the VD/DD GABAergic circuit. The chain is Mitochondrial sodium/calcium exchanger protein from Caenorhabditis elegans.